Reading from the N-terminus, the 270-residue chain is MLVVEGLTCRFGTKAAVDNASFSITPGGFVGVIGRSGAGKSTLLRMINRLAEPSEGRILFHDQDVTALQGQALRQWRARSAMIFQQFNLIGRLDVLTNVLMGRLAEIPSWRSLAQLWPEKDKALAMSALDQFDMAAYAAQRADQLSGGQQQRVAIARALVQQPDIVLADEPIASLDPRNTKIVMDALLRINKHFGITVICNLHSLDLARNYCDRLIGMASGRVVFDGAPEQLTDQIARELYDLEANEVMGAEHHVPGASSVPELAGAVAA.

Residues 2 to 245 (LVVEGLTCRF…IARELYDLEA (244 aa)) enclose the ABC transporter domain. Residue 34–41 (GRSGAGKS) participates in ATP binding.

Belongs to the ABC transporter superfamily. Phosphonates importer (TC 3.A.1.9.1) family. In terms of assembly, the complex is composed of two ATP-binding proteins (PhnC), two transmembrane proteins (PhnE) and a solute-binding protein (PhnD).

The protein localises to the cell inner membrane. The enzyme catalyses phosphonate(out) + ATP + H2O = phosphonate(in) + ADP + phosphate + H(+). Part of the ABC transporter complex PhnCDE involved in phosphonates import. Responsible for energy coupling to the transport system. The sequence is that of Phosphonates import ATP-binding protein PhnC 2 from Rhodopseudomonas palustris (strain BisA53).